The following is a 48-amino-acid chain: ASCKCDDDGPDVRSATFTGTVDFWNCNEGWEKCTAVYTPVASCCRKKK.

Intrachain disulfides connect Cys-3/Cys-43, Cys-5/Cys-33, and Cys-26/Cys-44.

The protein belongs to the sea anemone sodium channel inhibitory toxin family. Type II subfamily.

The protein resides in the secreted. Its subcellular location is the nematocyst. Its function is as follows. Binds specifically to voltage-gated sodium channels (Nav), thereby delaying their inactivation during signal transduction. Its toxicity is weaker than that of RpIII (AC P08380). The sequence is that of Delta-stichotoxin-Hmg4a from Heteractis magnifica (Magnificent sea anemone).